The following is a 166-amino-acid chain: Co-chaperone protein HscB homolog (166 aa).

Residues 3–75 (QYFTLFRIEP…IDRAAYLLKT (73 aa)) enclose the J domain.

The protein belongs to the HscB family. In terms of assembly, interacts with HscA and stimulates its ATPase activity.

Co-chaperone involved in the maturation of iron-sulfur cluster-containing proteins. Seems to help targeting proteins to be folded toward HscA. The protein is Co-chaperone protein HscB homolog of Neisseria meningitidis serogroup A / serotype 4A (strain DSM 15465 / Z2491).